The chain runs to 107 residues: Large ribosomal subunit protein bL21 (107 aa).

Belongs to the bacterial ribosomal protein bL21 family. In terms of assembly, part of the 50S ribosomal subunit. Contacts protein L20.

Its function is as follows. This protein binds to 23S rRNA in the presence of protein L20. The chain is Large ribosomal subunit protein bL21 from Buchnera aphidicola subsp. Schizaphis graminum (strain Sg).